Reading from the N-terminus, the 265-residue chain is MTRIRFTAAYDGRPYLGWQSQPGGRTVQDVLERAFSGLFGTTCRIHGSGRTDAGVHALGQVFHADAPDTHRIPADKWPAALNTRLPRTIRITHAEYVPPGFHARFSATGKTYRYCISRAPILNPFDAGLAWHRPLAWSVDILEQAVHLFRGTHDFTAFAALRGNEPRPIPEGYFRRTITQTQVAQTGEHVFITFTGTGFLYKMVRLMTGAAHEAARGKITLEELARLINAPLPDDKSPFCAPPDGLTLMRVHYPEETFGDKKKIN.

D52 serves as the catalytic Nucleophile. Residue Y112 coordinates substrate.

This sequence belongs to the tRNA pseudouridine synthase TruA family. In terms of assembly, homodimer.

It carries out the reaction uridine(38/39/40) in tRNA = pseudouridine(38/39/40) in tRNA. Its function is as follows. Formation of pseudouridine at positions 38, 39 and 40 in the anticodon stem and loop of transfer RNAs. This Akkermansia muciniphila (strain ATCC BAA-835 / DSM 22959 / JCM 33894 / BCRC 81048 / CCUG 64013 / CIP 107961 / Muc) protein is tRNA pseudouridine synthase A.